The chain runs to 324 residues: Glyoxylate/hydroxypyruvate reductase B (324 aa).

Catalysis depends on residues Arg237 and Glu266. His285 functions as the Proton donor in the catalytic mechanism.

This sequence belongs to the D-isomer specific 2-hydroxyacid dehydrogenase family. GhrB subfamily. Homodimer.

The protein localises to the cytoplasm. It carries out the reaction glycolate + NADP(+) = glyoxylate + NADPH + H(+). It catalyses the reaction (R)-glycerate + NAD(+) = 3-hydroxypyruvate + NADH + H(+). The enzyme catalyses (R)-glycerate + NADP(+) = 3-hydroxypyruvate + NADPH + H(+). Catalyzes the NADPH-dependent reduction of glyoxylate and hydroxypyruvate into glycolate and glycerate, respectively. The chain is Glyoxylate/hydroxypyruvate reductase B from Shigella flexneri serotype 5b (strain 8401).